The following is a 113-amino-acid chain: Cytochrome c2 (113 aa).

Residues C15, C18, H19, and M92 each coordinate heme c.

Belongs to the cytochrome c family. In terms of processing, binds 1 heme c group covalently per subunit.

Functionally, cytochrome c2 is found mainly in purple, non-sulfur, photosynthetic bacteria where it functions as the electron donor to the oxidized bacteriochlorophyll in the photophosphorylation pathway. However, it may also have a role in the respiratory chain and is found in some non-photosynthetic bacteria. This is Cytochrome c2 from Pararhodospirillum photometricum (Rhodospirillum photometricum).